The sequence spans 393 residues: Phosphoglycerate kinase (393 aa).

Substrate contacts are provided by residues 21-23 (DLN), Arg-36, 59-62 (HLGR), Arg-113, and Arg-146. Residues Lys-197, Glu-319, and 345–348 (GGDT) each bind ATP.

This sequence belongs to the phosphoglycerate kinase family. In terms of assembly, monomer.

The protein resides in the cytoplasm. The enzyme catalyses (2R)-3-phosphoglycerate + ATP = (2R)-3-phospho-glyceroyl phosphate + ADP. The protein operates within carbohydrate degradation; glycolysis; pyruvate from D-glyceraldehyde 3-phosphate: step 2/5. The polypeptide is Phosphoglycerate kinase (Nitratidesulfovibrio vulgaris (strain ATCC 29579 / DSM 644 / CCUG 34227 / NCIMB 8303 / VKM B-1760 / Hildenborough) (Desulfovibrio vulgaris)).